The primary structure comprises 778 residues: Ent-sandaracopimaradiene synthase KSL3, chloroplastic (778 aa).

A chloroplast-targeting transit peptide spans 1-35 (MLLTSTNTLKISSQRKEWEAKDLTGMFHGQVNGRV). Aspartate 527, glutamate 531, asparagine 670, aspartate 671, and aspartate 678 together coordinate Mg(2+). The short motif at 527 to 531 (DDFFE) is the DDXXD motif element.

The protein belongs to the terpene synthase family. The cofactor is Mg(2+).

The protein localises to the plastid. Its subcellular location is the chloroplast. It catalyses the reaction ent-copalyl diphosphate = ent-sandaracopimara-8(14),15-diene + diphosphate. The catalysed reaction is ent-copalyl diphosphate = ent-(12E)-labda-8(17),12,14-triene + diphosphate. It participates in secondary metabolite biosynthesis; terpenoid biosynthesis. Diterpene cyclase involved in the biosynthesis of labdane-related diterpenoids (LRDs) natural products. Catalyzes the cyclization of ent-CDP into ent-sandaracopimaradiene as a major, and ent-pimaradiene and ent-labdatriene as minor products. The polypeptide is Ent-sandaracopimaradiene synthase KSL3, chloroplastic (Ricinus communis (Castor bean)).